We begin with the raw amino-acid sequence, 128 residues long: Ribonuclease pancreatic (128 aa).

Residues 1–23 are disordered; it reads AESSAMKFQRQHVDSEGSSSSNA. Substrate contacts are provided by Lys-7 and Arg-10. The Proton acceptor role is filled by His-12. 4 disulfide bridges follow: Cys-26-Cys-84, Cys-40-Cys-95, Cys-58-Cys-110, and Cys-65-Cys-72. Substrate-binding positions include 41–45, Lys-66, and Arg-85; that span reads KPVNT. His-119 (proton donor) is an active-site residue.

Belongs to the pancreatic ribonuclease family. Monomer. Interacts with and forms tight 1:1 complexes with RNH1. Dimerization of two such complexes may occur. Interaction with RNH1 inhibits this protein. As to expression, pancreas.

Its subcellular location is the secreted. It carries out the reaction an [RNA] containing cytidine + H2O = an [RNA]-3'-cytidine-3'-phosphate + a 5'-hydroxy-ribonucleotide-3'-[RNA].. The catalysed reaction is an [RNA] containing uridine + H2O = an [RNA]-3'-uridine-3'-phosphate + a 5'-hydroxy-ribonucleotide-3'-[RNA].. In terms of biological role, endonuclease that catalyzes the cleavage of RNA on the 3' side of pyrimidine nucleotides. Acts on single-stranded and double-stranded RNA. The protein is Ribonuclease pancreatic (RNASE1) of Hydrochoerus hydrochaeris (Capybara).